The following is a 129-amino-acid chain: Large ribosomal subunit protein uL22 (129 aa).

The protein belongs to the universal ribosomal protein uL22 family. In terms of assembly, part of the 50S ribosomal subunit.

This protein binds specifically to 23S rRNA; its binding is stimulated by other ribosomal proteins, e.g. L4, L17, and L20. It is important during the early stages of 50S assembly. It makes multiple contacts with different domains of the 23S rRNA in the assembled 50S subunit and ribosome. In terms of biological role, the globular domain of the protein is located near the polypeptide exit tunnel on the outside of the subunit, while an extended beta-hairpin is found that lines the wall of the exit tunnel in the center of the 70S ribosome. The polypeptide is Large ribosomal subunit protein uL22 (Metamycoplasma hominis (strain ATCC 23114 / DSM 25592 / NBRC 14850 / NCTC 10111 / PG21) (Mycoplasma hominis)).